The following is a 43-amino-acid chain: Disintegrin CV (43 aa).

4 cysteine pairs are disulfide-bonded: Cys-1/Cys-10, Cys-6/Cys-29, Cys-7/Cys-34, and Cys-19/Cys-36. The Disintegrin domain occupies 1-43; that stretch reads CTTGPCCRQCKLKPAGTTCWRTSVSSHYCTGRSCECPSYPGNG. The Cell attachment site; atypical (RTS) signature appears at 21–23; the sequence is RTS.

It belongs to the disintegrin family. Short disintegrin subfamily. In terms of assembly, monomer. Expressed by the venom gland.

Its subcellular location is the secreted. Functionally, specifically interacts with the alpha-1/beta-1 integrin (ITGA1/ITGB1). Exhibits highly inhibitory effects on cell adhesion and cell migration to collagens I and IV. Also shows in vivo anti-angiogenic activity. The polypeptide is Disintegrin CV (Cerastes vipera (Sahara sand viper)).